Consider the following 117-residue polypeptide: UPF0125 protein VV0820 (117 aa).

The tract at residues 90–117 (RKRAEQAKESGAADPVTGGKPSPLRKAD) is disordered.

The protein belongs to the UPF0125 (RnfH) family.

This chain is UPF0125 protein VV0820, found in Vibrio vulnificus (strain YJ016).